We begin with the raw amino-acid sequence, 248 residues long: MNFYRSSIISQIIKYNRRLAKSIICEDDSQIITLTAFVNQCLWCHKRVSVSAILLTTDNKILVCNRRDSFLYSEIIRTRNMFRKKRLFLNYSNYLSKQERSILSSFFSLYPATADNDRIDAIYPGGIPKRGENVPECLSREIKEEVNIDNSFVFIDTRFFIHGIIEDTIINKFFEVIFFVGRISLTSDQIIDTFKSNHEIKDLIFLDPNSGNGLQYEIAKYALDTAKLKCYGHRGCYYESLKKLTEDD.

In terms of domain architecture, Nudix hydrolase spans 45-227 (HKRVSVSAIL…IAKYALDTAK (183 aa)). The Nudix box signature appears at 126–147 (GIPKRGENVPECLSREIKEEVN). Position 132 (Glu-132) interacts with Mg(2+). The active-site Nucleophile is Glu-141. Glu-145 is a binding site for Mn(2+). Mg(2+) is bound at residue Asp-167.

It belongs to the Nudix hydrolase family. Mg(2+) serves as cofactor. Requires Mn(2+) as cofactor.

It is found in the host mitochondrion. Functionally, decapping enzyme that remove the protective 5'-cap from both host and viral mRNAs to commit transcripts for decay by the cellular exonuclease XRN1. Preferentially targets spliced mRNAs and since all viral genes are intronless, it preferentially targets host over viral transcripts. Acceleration of the turnover of cellular transcripts promotes the shutoff of host protein synthesis and therefore diminish the magnitude of antiviral response. The sequence is that of mRNA-decapping protein OPG122 (OPG122) from Vaccinia virus (strain Copenhagen) (VACV).